The primary structure comprises 187 residues: MSVVPLMFRDWWDELDFPMRTSRLLDQHFGQGLKRDDLMSSVWNSRPTVLRSGYLRPWHTNSLQKQESGSTLNIDSEKFEVILDVQQFSPSEITVKVADKFVIVEGKHEEKQDEHGYVSRQFSRRYQLPSDVNPDTVTSSLSSDGLLTIKAPMKALPPPQTERLVQITQTGPSSKEDNAKKVETSTA.

A sHSP domain is found at 61 to 170 (NSLQKQESGS…TERLVQITQT (110 aa)). Residues 151–187 (APMKALPPPQTERLVQITQTGPSSKEDNAKKVETSTA) are disordered. The span at 174–187 (SKEDNAKKVETSTA) shows a compositional bias: basic and acidic residues.

The protein belongs to the small heat shock protein (HSP20) family. Ubiquitously expressed during embryogenesis with no sign of tissue specificity in expression up to stage 16.

Its function is as follows. Vital role in embryonic development. The polypeptide is Protein lethal(2)essential for life (l(2)efl) (Drosophila melanogaster (Fruit fly)).